Reading from the N-terminus, the 222-residue chain is Kinetochore protein Spc25 (222 aa).

The stretch at 51–100 (RHQRKVGKLQKVIMERREELDKRVSFIEELDRELEATKLRSLAMKDRIKQ) forms a coiled coil.

The protein belongs to the SPC25 family. As to quaternary structure, component of the Ndc80 complex, which is composed of Ndc80, Nuf2 and Spc25.

It is found in the nucleus. The protein localises to the chromosome. It localises to the centromere. The protein resides in the kinetochore. Its function is as follows. Acts as a component of the essential kinetochore-associated Ndc80 complex, which is required for chromosome segregation and spindle checkpoint activity during meiosis and mitosis. Required for kinetochore integrity and the organization of stable microtubule binding sites in the outer plate of the kinetochore. Participates in SAC signaling that responds specifically to disruptions in spindle microtubule dynamics. The NDC80 complex synergistically enhances the affinity of the SKA1 complex for microtubules and may allow the NDC80 complex to track depolymerizing microtubules. The chain is Kinetochore protein Spc25 from Drosophila sechellia (Fruit fly).